We begin with the raw amino-acid sequence, 519 residues long: MSGLLYALLIIPMIGIFFILSFDSYNFNITSNNSNSGSFSEAGAGKNSGGELLKVLVINNELNFYKKIAFITTIMNLIVSLIIYILFDFSTNQFQFVQDALELSVYNIYLGVDGLSIYFVLLTTIIMPIALISNWNSITHNIKAYLIIILLLETLLLAVFLVLDVLLFYIFFESILPPLFILIGLFGSSNKVRASFYIFLYTLLGSLFLLLSILTMSSLIGTTYLDVLSKSNFEYTTQIFLFLGVFIAFAVKTPTVFLNSWLLKAHVESPLGGSIVLAGIVLKLSLYGIFRLILPLLPKISLNYTSIIFSIGIITIIYASFSTLRTIDIKELIAYSSVSHAAVYLIGVFSNIIQGIEGGILLGLGHGFVSSGLFICAGGVLYDRSGTRIISYYRGTAQVMPLFSILFFILCLGNCGAPLTLNFVGEFMSLYGTFERLPLLGLFSSSSMIFSAAYTIYMYNRIAFGGSFSKFFEENIGDVTKREFFLLFTLIIFTIMFGIYPSFILDGLHYNVTSLLFGV.

14 helical membrane passes run 2-22, 68-88, 112-132, 146-166, 167-187, 196-216, 239-259, 270-290, 304-324, 333-353, 360-380, 399-419, 437-457, and 484-504; these read SGLLYALLIIPMIGIFFILSF, IAFITTIMNLIVSLIIYILFD, VDGLSIYFVLLTTIIMPIALI, LIIILLLETLLLAVFLVLDVL, LFYIFFESILPPLFILIGLFG, FYIFLYTLLGSLFLLLSILTM, IFLFLGVFIAFAVKTPTVFLN, PLGGSIVLAGIVLKLSLYGIF, YTSIIFSIGIITIIYASFSTL, IAYSSVSHAAVYLIGVFSNII, ILLGLGHGFVSSGLFICAGGV, VMPLFSILFFILCLGNCGAPL, LPLLGLFSSSSMIFSAAYTIY, and FFLLFTLIIFTIMFGIYPSFI.

It belongs to the complex I subunit 4 family.

It is found in the mitochondrion membrane. The enzyme catalyses a ubiquinone + NADH + 5 H(+)(in) = a ubiquinol + NAD(+) + 4 H(+)(out). In terms of biological role, core subunit of the mitochondrial membrane respiratory chain NADH dehydrogenase (Complex I) that is believed to belong to the minimal assembly required for catalysis. Complex I functions in the transfer of electrons from NADH to the respiratory chain. The immediate electron acceptor for the enzyme is believed to be ubiquinone. The polypeptide is NADH-ubiquinone oxidoreductase chain 4 (ND4) (Podospora anserina (strain S / ATCC MYA-4624 / DSM 980 / FGSC 10383) (Pleurage anserina)).